The primary structure comprises 151 residues: Macrodomain Ter protein (151 aa).

Belongs to the MatP family. In terms of assembly, homodimer.

It is found in the cytoplasm. Functionally, required for spatial organization of the terminus region of the chromosome (Ter macrodomain) during the cell cycle. Prevents early segregation of duplicated Ter macrodomains during cell division. Binds specifically to matS, which is a 13 bp signature motif repeated within the Ter macrodomain. This Photorhabdus laumondii subsp. laumondii (strain DSM 15139 / CIP 105565 / TT01) (Photorhabdus luminescens subsp. laumondii) protein is Macrodomain Ter protein.